A 123-amino-acid chain; its full sequence is Glycine cleavage system H protein (123 aa).

The region spanning 22–104 (VATVGITSYA…FGAGWLVKVR (83 aa)) is the Lipoyl-binding domain. K63 bears the N6-lipoyllysine mark.

This sequence belongs to the GcvH family. As to quaternary structure, the glycine cleavage system is composed of four proteins: P, T, L and H. (R)-lipoate serves as cofactor.

In terms of biological role, the glycine cleavage system catalyzes the degradation of glycine. The H protein shuttles the methylamine group of glycine from the P protein to the T protein. The sequence is that of Glycine cleavage system H protein from Clavibacter sepedonicus (Clavibacter michiganensis subsp. sepedonicus).